Consider the following 431-residue polypeptide: Adenylosuccinate lyase (431 aa).

N(6)-(1,2-dicarboxyethyl)-AMP-binding positions include R4–Y5, R67–D69, and T93–S94. Residue H141 is the Proton donor/acceptor of the active site. Residue Q212 coordinates N(6)-(1,2-dicarboxyethyl)-AMP. The Proton donor/acceptor role is filled by S262. Residues S263, K268 to N270, N276, and S307 to I311 contribute to the N(6)-(1,2-dicarboxyethyl)-AMP site.

It belongs to the lyase 1 family. Adenylosuccinate lyase subfamily. Homodimer and homotetramer. Residues from neighboring subunits contribute catalytic and substrate-binding residues to each active site.

The catalysed reaction is N(6)-(1,2-dicarboxyethyl)-AMP = fumarate + AMP. It catalyses the reaction (2S)-2-[5-amino-1-(5-phospho-beta-D-ribosyl)imidazole-4-carboxamido]succinate = 5-amino-1-(5-phospho-beta-D-ribosyl)imidazole-4-carboxamide + fumarate. It participates in purine metabolism; AMP biosynthesis via de novo pathway; AMP from IMP: step 2/2. It functions in the pathway purine metabolism; IMP biosynthesis via de novo pathway; 5-amino-1-(5-phospho-D-ribosyl)imidazole-4-carboxamide from 5-amino-1-(5-phospho-D-ribosyl)imidazole-4-carboxylate: step 2/2. Functionally, catalyzes two reactions in de novo purine nucleotide biosynthesis. Catalyzes the breakdown of 5-aminoimidazole- (N-succinylocarboxamide) ribotide (SAICAR or 2-[5-amino-1-(5-phospho-beta-D-ribosyl)imidazole-4-carboxamido]succinate) to 5-aminoimidazole-4-carboxamide ribotide (AICAR or 5-amino-1-(5-phospho-beta-D-ribosyl)imidazole-4-carboxamide) and fumarate, and of adenylosuccinate (ADS or N(6)-(1,2-dicarboxyethyl)-AMP) to adenosine monophosphate (AMP) and fumarate. This chain is Adenylosuccinate lyase (purB), found in Staphylococcus haemolyticus (strain JCSC1435).